Here is a 526-residue protein sequence, read N- to C-terminus: ATP synthase subunit alpha (526 aa).

171 to 178 (GDRQTGKT) serves as a coordination point for ATP.

This sequence belongs to the ATPase alpha/beta chains family. F-type ATPases have 2 components, CF(1) - the catalytic core - and CF(0) - the membrane proton channel. CF(1) has five subunits: alpha(3), beta(3), gamma(1), delta(1), epsilon(1). CF(0) has four main subunits: a(1), b(1), b'(1) and c(9-12).

Its subcellular location is the cell inner membrane. It catalyses the reaction ATP + H2O + 4 H(+)(in) = ADP + phosphate + 5 H(+)(out). Its function is as follows. Produces ATP from ADP in the presence of a proton gradient across the membrane. The alpha chain is a regulatory subunit. The polypeptide is ATP synthase subunit alpha (Chlorobium phaeobacteroides (strain DSM 266 / SMG 266 / 2430)).